Here is a 324-residue protein sequence, read N- to C-terminus: Beta-ketoacyl-[acyl-carrier-protein] synthase III (324 aa).

Active-site residues include Cys116 and His251. The tract at residues 252-256 is ACP-binding; it reads QANLR. The active site involves Asn281.

The protein belongs to the thiolase-like superfamily. FabH family. In terms of assembly, homodimer.

The protein resides in the cytoplasm. It catalyses the reaction malonyl-[ACP] + acetyl-CoA + H(+) = 3-oxobutanoyl-[ACP] + CO2 + CoA. Its pathway is lipid metabolism; fatty acid biosynthesis. Its function is as follows. Catalyzes the condensation reaction of fatty acid synthesis by the addition to an acyl acceptor of two carbons from malonyl-ACP. Catalyzes the first condensation reaction which initiates fatty acid synthesis and may therefore play a role in governing the total rate of fatty acid production. Possesses both acetoacetyl-ACP synthase and acetyl transacylase activities. Its substrate specificity determines the biosynthesis of branched-chain and/or straight-chain of fatty acids. In Xylella fastidiosa (strain 9a5c), this protein is Beta-ketoacyl-[acyl-carrier-protein] synthase III.